The sequence spans 353 residues: NADH-quinone oxidoreductase subunit H (353 aa).

A run of 9 helical transmembrane segments spans residues 8–28, 75–95, 108–128, 148–168, 179–199, 229–249, 258–278, 297–317, and 319–339; these read LLVY…IFIW, GVFW…FAAI, IGIL…FMAG, VSYE…TGSL, VPFI…AMAE, LFYL…TTLF, LHPV…IIWV, FLLP…LIAP, and INTA…VLLF.

The protein belongs to the complex I subunit 1 family. NDH-1 is composed of 14 different subunits. Subunits NuoA, H, J, K, L, M, N constitute the membrane sector of the complex.

It localises to the cell membrane. It catalyses the reaction a quinone + NADH + 5 H(+)(in) = a quinol + NAD(+) + 4 H(+)(out). Its function is as follows. NDH-1 shuttles electrons from NADH, via FMN and iron-sulfur (Fe-S) centers, to quinones in the respiratory chain. The immediate electron acceptor for the enzyme in this species is believed to be ubiquinone. Couples the redox reaction to proton translocation (for every two electrons transferred, four hydrogen ions are translocated across the cytoplasmic membrane), and thus conserves the redox energy in a proton gradient. This subunit may bind ubiquinone. In Dehalococcoides mccartyi (strain CBDB1), this protein is NADH-quinone oxidoreductase subunit H.